Consider the following 430-residue polypeptide: Asparagine--tRNA ligase (430 aa).

It belongs to the class-II aminoacyl-tRNA synthetase family. Homodimer.

Its subcellular location is the cytoplasm. The enzyme catalyses tRNA(Asn) + L-asparagine + ATP = L-asparaginyl-tRNA(Asn) + AMP + diphosphate + H(+). The polypeptide is Asparagine--tRNA ligase (Shouchella clausii (strain KSM-K16) (Alkalihalobacillus clausii)).